The chain runs to 158 residues: Transcription elongation factor GreA (158 aa).

A coiled-coil region spans residues A47 to E68.

Belongs to the GreA/GreB family.

Functionally, necessary for efficient RNA polymerase transcription elongation past template-encoded arresting sites. The arresting sites in DNA have the property of trapping a certain fraction of elongating RNA polymerases that pass through, resulting in locked ternary complexes. Cleavage of the nascent transcript by cleavage factors such as GreA or GreB allows the resumption of elongation from the new 3'terminus. GreA releases sequences of 2 to 3 nucleotides. This chain is Transcription elongation factor GreA, found in Flavobacterium psychrophilum (strain ATCC 49511 / DSM 21280 / CIP 103535 / JIP02/86).